The primary structure comprises 196 residues: MSEPLLTVADSLKDRARAALGSRNLILVGLMGAGKSAVGRIVASQLGIPFIDSDHEIERVSRMTIPELFAAYGEDEFRALETRVMKRLLKGGPRVVSTGGGAFINERTRRHIIKGGVSVWLKADLDVLWERVNKRDNRPLLKTENPKQTLEGLMNARYPIYAQADLTVLSRDVRKEIMADEVLKAMIEAQKESAAS.

ATP is bound at residue 32–37; the sequence is GAGKSA. Serine 36 contacts Mg(2+). Residues aspartate 54, arginine 78, and glycine 100 each contribute to the substrate site. Arginine 138 lines the ATP pocket. Arginine 157 is a binding site for substrate. Residue arginine 174 coordinates ATP.

The protein belongs to the shikimate kinase family. In terms of assembly, monomer. Mg(2+) is required as a cofactor.

The protein resides in the cytoplasm. The catalysed reaction is shikimate + ATP = 3-phosphoshikimate + ADP + H(+). It participates in metabolic intermediate biosynthesis; chorismate biosynthesis; chorismate from D-erythrose 4-phosphate and phosphoenolpyruvate: step 5/7. Catalyzes the specific phosphorylation of the 3-hydroxyl group of shikimic acid using ATP as a cosubstrate. The protein is Shikimate kinase of Rhizobium leguminosarum bv. trifolii (strain WSM2304).